The following is an 867-amino-acid chain: Retinoblastoma-related protein 1 (867 aa).

The domain A stretch occupies residues 275–476; it reads TPVTSAMTTA…EKGSSLYNSL (202 aa). The tract at residues 275–722 is pocket; binds RPD3I and RBAP1; it reads TPVTSAMTTA…NEVFVPAAKP (448 aa). The spacer stretch occupies residues 477-594; the sequence is IVARPSVASE…PVGGNEKCAD (118 aa). The disordered stretch occupies residues 512 to 563; sequence EGLPATPSKKRAAGPDDNADPRSPKRSCNESRNTVVERNLQTPPPKQSHMVS. Over residues 530-540 the composition is skewed to basic and acidic residues; sequence ADPRSPKRSCN. The span at 541–552 shows a compositional bias: polar residues; it reads ESRNTVVERNLQ. Residues 595 to 722 are domain B; the sequence is VTIHIFFSKI…NEVFVPAAKP (128 aa). Disordered regions lie at residues 734–762 and 843–867; these read PEDKKNASGQIPGSPKPSPFPNLPDMSPK and QINGGSTSDPAAAFSPLSKKRETDT.

Belongs to the retinoblastoma protein (RB) family. In terms of assembly, interacts with RPD3I, RBAP1, the Arabidopsis cyclin CYCD3-1, the mastrevirus replication-associated protein A (RepA) and the begomovirus replication-associated protein (Rep). As to expression, ubiquitous.

It is found in the nucleus. Its function is as follows. Regulator of biological processes that recruits a histone deacetylase to control gene transcription. May play a role in the entry into mitosis, negatively regulating the cell proliferation. Formation of stable complexes with geminiviridae replication-associated proteins may create a cellular environment which favors viral DNA replication. The sequence is that of Retinoblastoma-related protein 1 (RBR1) from Zea mays (Maize).